Consider the following 492-residue polypeptide: Proline--tRNA ligase (492 aa).

It belongs to the class-II aminoacyl-tRNA synthetase family. ProS type 3 subfamily. As to quaternary structure, homodimer.

The protein localises to the cytoplasm. The catalysed reaction is tRNA(Pro) + L-proline + ATP = L-prolyl-tRNA(Pro) + AMP + diphosphate. In terms of biological role, catalyzes the attachment of proline to tRNA(Pro) in a two-step reaction: proline is first activated by ATP to form Pro-AMP and then transferred to the acceptor end of tRNA(Pro). This chain is Proline--tRNA ligase, found in Flavobacterium johnsoniae (strain ATCC 17061 / DSM 2064 / JCM 8514 / BCRC 14874 / CCUG 350202 / NBRC 14942 / NCIMB 11054 / UW101) (Cytophaga johnsonae).